Here is a 317-residue protein sequence, read N- to C-terminus: Transaldolase (317 aa).

K132 functions as the Schiff-base intermediate with substrate in the catalytic mechanism.

The protein belongs to the transaldolase family. Type 1 subfamily. Homodimer.

The protein localises to the cytoplasm. It catalyses the reaction D-sedoheptulose 7-phosphate + D-glyceraldehyde 3-phosphate = D-erythrose 4-phosphate + beta-D-fructose 6-phosphate. It participates in carbohydrate degradation; pentose phosphate pathway; D-glyceraldehyde 3-phosphate and beta-D-fructose 6-phosphate from D-ribose 5-phosphate and D-xylulose 5-phosphate (non-oxidative stage): step 2/3. Functionally, transaldolase is important for the balance of metabolites in the pentose-phosphate pathway. This chain is Transaldolase, found in Haemophilus influenzae (strain PittGG).